Consider the following 73-residue polypeptide: Adipokinetic prohormone type 2 (73 aa).

An N-terminal signal peptide occupies residues 1–20; the sequence is MCRIFIVLLVVAALAIIIEG. At Gln-21 the chain carries Pyrrolidone carboxylic acid. Asn-30 is subject to Asparagine amide. A propeptide spanning residues 34-73 is cleaved from the precursor; sequence SISSEQINDDCNPEEAIFQIYKLIVSEGERIRACQRDGKM.

As to expression, expressed in corpora cardiaca (CC), corpora allata (CA) and gnathal ganglion (GNG) (at protein level). Expression in CC and CA detected in all animals, expression in GNG detected in few animals (at protein level). Not expressed in antennal lobe (AL) (at protein level).

It is found in the secreted. In terms of biological role, this hormone, released from cells in the corpora cardiaca, causes release of diglycerides from the fat body and stimulation of muscles to use these diglycerides as an energy source during energy-demanding processes. The polypeptide is Adipokinetic prohormone type 2 (Agrotis ipsilon (Black cutworm moth)).